A 587-amino-acid polypeptide reads, in one-letter code: Cryptochrome-1 (587 aa).

The region spanning 3–132 (VNAVHWFRKG…EVIVRISHTL (130 aa)) is the Photolyase/cryptochrome alpha/beta domain. Lys11 participates in a covalent cross-link: Glycyl lysine isopeptide (Lys-Gly) (interchain with G-Cter in ubiquitin). The short motif at 50–54 (NRWRF) is the LIR 1 element. The residue at position 71 (Ser71) is a Phosphoserine; by AMPK. Residues 82–87 (DVFPRL) carry the LIR 2 motif. Lys107 is covalently cross-linked (Glycyl lysine isopeptide (Lys-Gly) (interchain with G-Cter in ubiquitin)). An LIR 3 motif is present at residues 151–156 (KRFQTL). A Glycyl lysine isopeptide (Lys-Gly) (interchain with G-Cter in ubiquitin) cross-link involves residue Lys159. At Ser247 the chain carries Phosphoserine; by MAPK. Ser252 lines the FAD pocket. Short sequence motifs (LIR) lie at residues 255–260 (LRFGCL) and 271–276 (DLYKKV). Residue Ser280 is modified to Phosphoserine; by AMPK. Positions 285-290 (SLYGQL) match the LIR 6 motif. Gln289 lines the FAD pocket. Lys329 is covalently cross-linked (Glycyl lysine isopeptide (Lys-Gly) (interchain with G-Cter in ubiquitin)). Residues 335–339 (TGFPW) carry the LIR 7 motif. FAD is bound at residue His355. A required for inhibition of CLOCK-BMAL1-mediated transcription region spans residues 371 to 470 (WISWEEGMKV…LIGVNYPKPM (100 aa)). An LIR 8 motif is present at residues 379-384 (KVFEEL). Residue 387 to 389 (DAD) participates in FAD binding. Short sequence motifs (LIR) lie at residues 395 to 400 (GSWMWL), 411 to 416 (HCYCPV), and 430 to 435 (RRYLPV). The segment at 471 to 493 (VNHAEASRLNIERMKQIYQQLSR) is interaction with TIMELESS. Lys485 is covalently cross-linked (Glycyl lysine isopeptide (Lys-Gly) (interchain with G-Cter in ubiquitin)). 2 short sequence motifs (LIR) span residues 486-491 (QIYQQL) and 492-497 (SRYRGL). The interval 554–587 (GSSSMGHGLSNGKRPSQEEDTQSIGPKVQRQSTN) is disordered. The residue at position 569 (Ser569) is a Phosphoserine.

Belongs to the DNA photolyase class-1 family. In terms of assembly, component of the circadian core oscillator, which includes the CRY proteins, CLOCK or NPAS2, BMAL1 or BMAL2, CSNK1D and/or CSNK1E, TIMELESS, and the PER proteins. Interacts directly with TIMELESS. Interacts directly with PER1, PER2 and PER3; interaction with PER2 inhibits its ubiquitination and vice versa. Interacts with FBXL21. Interacts with FBXL3. Interacts with CLOCK-BMAL1 independently of PER2 and DNA. Interacts with HDAC1, HDAC2 and SIN3B. Interacts with nuclear receptors AR, NR1D1, NR3C1/GR, RORA and RORC; the interaction with at least NR3C1/GR is ligand dependent. Interacts with PRKDC. Interacts with the G protein subunit alpha GNAS; the interaction may block GPCR-mediated regulation of cAMP concentrations. Interacts with PRMT5. Interacts with EZH2. Interacts with MYBBP1A, DOCK7, HNRNPU, RPL7A, RPL8 and RPS3. Interacts with PPP5C (via TPR repeats). Interacts with MAP1LC3B. Interacts with CLOCK. Interacts with BMAL1. Interacts weakly with HDAC3; this interaction is enhanced in the presence of FBXL3. Interacts with TRIM28, KCTD5 and DDB1 Interacts with HNF4A. Interacts with PSMD2 in a KDM8-dependent manner. Interacts with KDM8 in a FBXL3-dependent manner. Interacts with PPARG in a ligand-dependent manner. Interacts with PPARD (via domain NR LBD) and NR1I2 (via domain NR LBD) in a ligand-dependent manner. Interacts with PPARA, NR1I3 and VDR. Requires FAD as cofactor. (6R)-5,10-methylene-5,6,7,8-tetrahydrofolate is required as a cofactor. Phosphorylation on Ser-247 by MAPK is important for the inhibition of CLOCK-BMAL1-mediated transcriptional activity. Phosphorylation by CSNK1E requires interaction with PER1 or PER2. Phosphorylation at Ser-71 and Ser-280 by AMPK decreases protein stability. Phosphorylation at Ser-569 exhibits a robust circadian rhythm with a peak at CT8, increases protein stability, prevents SCF(FBXL3)-mediated degradation and is antagonized by interaction with PRKDC. Post-translationally, ubiquitinated by the SCF(FBXL3) and SCF(FBXL21) complexes, regulating the balance between degradation and stabilization. The SCF(FBXL3) complex is mainly nuclear and mediates ubiquitination and subsequent degradation of CRY1. In contrast, cytoplasmic SCF(FBXL21) complex-mediated ubiquitination leads to stabilize CRY1 and counteract the activity of the SCF(FBXL3) complex. The SCF(FBXL3) and SCF(FBXL21) complexes probably mediate ubiquitination at different Lys residues. Ubiquitination at Lys-11 and Lys-107 are specifically ubiquitinated by the SCF(FBXL21) complex but not by the SCF(FBXL3) complex. Ubiquitination may be inhibited by PER2. Deubiquitinated by USP7. In terms of processing, undergoes autophagy-mediated degradation in the liver in a time-dependent manner. Autophagic degradation of CRY1 (an inhibitor of gluconeogenesis) occurs during periods of reduced feeding allowing induction of gluconeogenesis and maintenance of blood glucose levels. As to expression, expressed in all tissues tested including spleen, liver, skeletal muscle, kidney, brain, intestine, eye, harderian gland, liver and heart. Highest levels in the eye, brain, kidney and harderian gland. In the brain, especially located to the suprachiasma nucleus (SCN).

It localises to the cytoplasm. The protein localises to the nucleus. In terms of biological role, transcriptional repressor which forms a core component of the circadian clock. The circadian clock, an internal time-keeping system, regulates various physiological processes through the generation of approximately 24 hour circadian rhythms in gene expression, which are translated into rhythms in metabolism and behavior. It is derived from the Latin roots 'circa' (about) and 'diem' (day) and acts as an important regulator of a wide array of physiological functions including metabolism, sleep, body temperature, blood pressure, endocrine, immune, cardiovascular, and renal function. Consists of two major components: the central clock, residing in the suprachiasmatic nucleus (SCN) of the brain, and the peripheral clocks that are present in nearly every tissue and organ system. Both the central and peripheral clocks can be reset by environmental cues, also known as Zeitgebers (German for 'timegivers'). The predominant Zeitgeber for the central clock is light, which is sensed by retina and signals directly to the SCN. The central clock entrains the peripheral clocks through neuronal and hormonal signals, body temperature and feeding-related cues, aligning all clocks with the external light/dark cycle. Circadian rhythms allow an organism to achieve temporal homeostasis with its environment at the molecular level by regulating gene expression to create a peak of protein expression once every 24 hours to control when a particular physiological process is most active with respect to the solar day. Transcription and translation of core clock components (CLOCK, NPAS2, BMAL1, BMAL2, PER1, PER2, PER3, CRY1 and CRY2) plays a critical role in rhythm generation, whereas delays imposed by post-translational modifications (PTMs) are important for determining the period (tau) of the rhythms (tau refers to the period of a rhythm and is the length, in time, of one complete cycle). A diurnal rhythm is synchronized with the day/night cycle, while the ultradian and infradian rhythms have a period shorter and longer than 24 hours, respectively. Disruptions in the circadian rhythms contribute to the pathology of cardiovascular diseases, cancer, metabolic syndromes and aging. A transcription/translation feedback loop (TTFL) forms the core of the molecular circadian clock mechanism. Transcription factors, CLOCK or NPAS2 and BMAL1 or BMAL2, form the positive limb of the feedback loop, act in the form of a heterodimer and activate the transcription of core clock genes and clock-controlled genes (involved in key metabolic processes), harboring E-box elements (5'-CACGTG-3') within their promoters. The core clock genes: PER1/2/3 and CRY1/2 which are transcriptional repressors form the negative limb of the feedback loop and interact with the CLOCK|NPAS2-BMAL1|BMAL2 heterodimer inhibiting its activity and thereby negatively regulating their own expression. This heterodimer also activates nuclear receptors NR1D1/2 and RORA/B/G, which form a second feedback loop and which activate and repress BMAL1 transcription, respectively. CRY1 and CRY2 have redundant functions but also differential and selective contributions at least in defining the pace of the SCN circadian clock and its circadian transcriptional outputs. More potent transcriptional repressor in cerebellum and liver than CRY2, though more effective in lengthening the period of the SCN oscillator. On its side, CRY2 seems to play a critical role in tuning SCN circadian period by opposing the action of CRY1. With CRY2, is dispensable for circadian rhythm generation but necessary for the development of intercellular networks for rhythm synchrony. Capable of translocating circadian clock core proteins such as PER proteins to the nucleus. Interacts with CLOCK-BMAL1 independently of PER proteins and is found at CLOCK-BMAL1-bound sites, suggesting that CRY may act as a molecular gatekeeper to maintain CLOCK-BMAL1 in a poised and repressed state until the proper time for transcriptional activation. Represses the CLOCK-BMAL1 induced transcription of BHLHE40/DEC1, ATF4, MTA1, KLF10 and NAMPT. May repress circadian target genes expression in collaboration with HDAC1 and HDAC2 through histone deacetylation. Mediates the clock-control activation of ATR and modulates ATR-mediated DNA damage checkpoint. In liver, mediates circadian regulation of cAMP signaling and gluconeogenesis by binding to membrane-coupled G proteins and blocking glucagon-mediated increases in intracellular cAMP concentrations and CREB1 phosphorylation. Inhibits hepatic gluconeogenesis by decreasing nuclear FOXO1 levels that down-regulates gluconeogenic gene expression. Besides its role in the maintenance of the circadian clock, is also involved in the regulation of other processes. Represses glucocorticoid receptor NR3C1/GR-induced transcriptional activity by binding to glucocorticoid response elements (GREs). Plays a key role in glucose and lipid metabolism modulation, in part, through the transcriptional regulation of genes involved in these pathways, such as LEP or ACSL4. Represses PPARD and its target genes in the skeletal muscle and limits exercise capacity. Plays an essential role in the generation of circadian rhythms in the retina. Represses the transcriptional activity of NR1I2. The chain is Cryptochrome-1 (CRY1) from Spalax judaei (Judean Mountains blind mole rat).